We begin with the raw amino-acid sequence, 229 residues long: uncharacterized protein (229 aa).

The HTH cro/C1-type domain occupies 24–78 (LRKWRSIFNASQSDLARKLGISPSVISDYESGRRKPGTAFLKKFVCALIELDGER). The segment at residues 35-54 (QSDLARKLGISPSVISDYES) is a DNA-binding region (H-T-H motif).

This is an uncharacterized protein from Archaeoglobus fulgidus (strain ATCC 49558 / DSM 4304 / JCM 9628 / NBRC 100126 / VC-16).